The following is a 101-amino-acid chain: Small ribosomal subunit protein uS10 (101 aa).

This sequence belongs to the universal ribosomal protein uS10 family. Part of the 30S ribosomal subunit.

In terms of biological role, involved in the binding of tRNA to the ribosomes. This is Small ribosomal subunit protein uS10 from Mycobacterium ulcerans (strain Agy99).